A 341-amino-acid chain; its full sequence is Phosphoribosylformylglycinamidine cyclo-ligase (341 aa).

This sequence belongs to the AIR synthase family.

It localises to the cytoplasm. The enzyme catalyses 2-formamido-N(1)-(5-O-phospho-beta-D-ribosyl)acetamidine + ATP = 5-amino-1-(5-phospho-beta-D-ribosyl)imidazole + ADP + phosphate + H(+). The protein operates within purine metabolism; IMP biosynthesis via de novo pathway; 5-amino-1-(5-phospho-D-ribosyl)imidazole from N(2)-formyl-N(1)-(5-phospho-D-ribosyl)glycinamide: step 2/2. In Thermosynechococcus vestitus (strain NIES-2133 / IAM M-273 / BP-1), this protein is Phosphoribosylformylglycinamidine cyclo-ligase.